A 366-amino-acid polypeptide reads, in one-letter code: Peptide chain release factor 2 (366 aa).

Residue Gln251 is modified to N5-methylglutamine.

Belongs to the prokaryotic/mitochondrial release factor family. In terms of processing, methylated by PrmC. Methylation increases the termination efficiency of RF2.

It localises to the cytoplasm. Peptide chain release factor 2 directs the termination of translation in response to the peptide chain termination codons UGA and UAA. The polypeptide is Peptide chain release factor 2 (prfB) (Listeria innocua serovar 6a (strain ATCC BAA-680 / CLIP 11262)).